Reading from the N-terminus, the 605-residue chain is SET domain-containing protein SNOG_11806 (605 aa).

Residues 68–132 (TLDLTGMKTP…SRKGTGGLRV (65 aa)) are disordered. Over residues 75 to 89 (KTPQPSRSPTVTRNV) the composition is skewed to polar residues. Over residues 104-115 (ESADDDDDDLQD) the composition is skewed to acidic residues. The region spanning 473–579 (PPVQIYRTAE…AGSEITVDYG (107 aa)) is the SET domain.

The protein belongs to the class V-like SAM-binding methyltransferase superfamily.

The sequence is that of SET domain-containing protein SNOG_11806 from Phaeosphaeria nodorum (strain SN15 / ATCC MYA-4574 / FGSC 10173) (Glume blotch fungus).